The primary structure comprises 350 residues: Adenine deaminase (350 aa).

Zn(2+)-binding residues include H24, H26, and H207. The active-site Proton donor is E210. D288 is a Zn(2+) binding site. Residue D289 participates in substrate binding.

Belongs to the metallo-dependent hydrolases superfamily. Adenosine and AMP deaminases family. Adenine deaminase type 2 subfamily. Requires Zn(2+) as cofactor.

It catalyses the reaction adenine + H2O + H(+) = hypoxanthine + NH4(+). In terms of biological role, catalyzes the hydrolytic deamination of adenine to hypoxanthine. Plays an important role in the purine salvage pathway and in nitrogen catabolism. The sequence is that of Adenine deaminase from Paraburkholderia xenovorans (strain LB400).